Here is a 305-residue protein sequence, read N- to C-terminus: Ribosomal RNA small subunit methyltransferase H (305 aa).

S-adenosyl-L-methionine is bound by residues 46 to 48 (GGH), D65, F92, D108, and H115.

Belongs to the methyltransferase superfamily. RsmH family.

The protein localises to the cytoplasm. The enzyme catalyses cytidine(1402) in 16S rRNA + S-adenosyl-L-methionine = N(4)-methylcytidine(1402) in 16S rRNA + S-adenosyl-L-homocysteine + H(+). Specifically methylates the N4 position of cytidine in position 1402 (C1402) of 16S rRNA. The chain is Ribosomal RNA small subunit methyltransferase H from Trichormus variabilis (strain ATCC 29413 / PCC 7937) (Anabaena variabilis).